The following is a 5537-amino-acid chain: Histone-lysine N-methyltransferase 2D (5537 aa).

The segment at 1–60 is disordered; that stretch reads MDSQKLAGEDKDSEPAADGPAASEDPSATESDLPNPHVGEVSVLSSGSPRLQETPQDCSG. Residue Ser-27 is modified to Phosphoserine. Residues 43–57 show a composition bias toward polar residues; sequence VLSSGSPRLQETPQD. The C2HC pre-PHD-type 1; degenerate zinc finger occupies 104-149; the sequence is GPNEAVLPSEDLSQIGFPEGLTPAHLGEPGGSCWAHHWCAAWSAGV. 3 consecutive PHD-type zinc fingers follow at residues 170–218, 226–276, and 273–323; these read QRCS…PEHS, EARC…CKVC, and CKVC…CRVC. The RING-type 1; atypical zinc-finger motif lies at 229-274; it reads CAVCEGPGELCDLFFCTSCGHHYHGACLDTALTARKRAGWQCPECK. The RING-type 2; degenerate zinc finger occupies 276-321; the sequence is CQACRKPGNDSKMLVCETCDKGYHTFCLKPPMEELPAHSWKCKACR. 4 disordered regions span residues 368–387, 393–416, 436–1331, and 1340–1359; these read VCSRFSPPEPGDTPTDEPDA, QGQPKGGHVTSMQPKEPGPLQCEA, EEMP…RLKS, and VVADIDSSPSKEEEEEDDDT. A 15 X 5 AA repeats of S/P-P-P-E/P-E/A region spans residues 439–668; the sequence is PLLPPPEESP…VSRLSPPPEE (230 aa). A compositionally biased stretch (pro residues) spans 440-473; that stretch reads LLPPPEESPLSPPPEESPTSPPPEASRLSPPPEE. Repeat copies occupy residues 442–446, 460–464, and 469–473. The span at 474 to 483 shows a compositional bias: low complexity; that stretch reads LPASPLPEAL. The span at 494–509 shows a compositional bias: pro residues; it reads LSPPPEESPLSPPPES. 2 consecutive repeat copies span residues 496-500 and 504-508. A compositionally biased stretch (low complexity) spans 510–519; sequence SPFSPLEESP. 2 stretches are compositionally biased toward pro residues: residues 520–547 and 554–595; these read LSPPEESPPSPALETPLSPPPEASPLSP and LSPP…PPPE. Tandem repeats lie at residues 521 to 525, 555 to 559, 564 to 568, 573 to 577, and 582 to 586. Residues 596–607 are compositionally biased toward low complexity; sequence ASRLFPPFEESP. The segment covering 608 to 649 has biased composition (pro residues); that stretch reads LSPPPEESPLSPPPEASRLSPPPEDSPMSPPPEESPMSPPPE. A run of 4 repeats spans residues 609-613, 618-622, 627-631, and 645-649. Over residues 650–662 the composition is skewed to low complexity; that stretch reads VSRLSPLPVVSRL. Residues 663 to 667 form repeat 15; that stretch reads SPPPE. Over residues 663–712 the composition is skewed to pro residues; it reads SPPPEESPLSPPPEESPTSPPPEASRLSPPPEDSPTSPPPEDSPASPPPE. Over residues 713–725 the composition is skewed to low complexity; sequence DSLMSLPLEESPL. The residue at position 744 (Ser-744) is a Phosphoserine. Composition is skewed to basic and acidic residues over residues 745–760 and 845–869; these read PRPEEPHLSPRPEEPH and RPEESHLSPELEKPPLSPRPEKPPE. Low complexity-rich tracts occupy residues 889 to 903 and 911 to 928; these read PSLSPLLGEPALSEP and LPEELPLSPSGEPSLSPQ. Pro residues predominate over residues 929 to 940; that stretch reads LMPPDPLPPPLS. Low complexity predominate over residues 941–954; sequence PIITAAAPPALSPL. Positions 994–1008 are enriched in pro residues; the sequence is EPVPPMILPPSPGSP. Low complexity predominate over residues 1048-1057; that stretch reads PLSVPSPLSP. Basic and acidic residues predominate over residues 1068–1080; it reads AELHEMETEKVSE. A Phosphoserine modification is found at Ser-1151. Thr-1195 carries the phosphothreonine modification. The span at 1207–1216 shows a compositional bias: polar residues; it reads EISNLSQGDA. Position 1249 is a phosphoserine (Ser-1249). Phosphothreonine is present on Thr-1267. Ser-1270 bears the Phosphoserine mark. Composition is skewed to basic residues over residues 1289 to 1302 and 1310 to 1329; these read GRRRSSPARSRIKQ and GRRRPRGGAHGGRGRGRARL. PHD-type zinc fingers lie at residues 1377–1430, 1427–1477, and 1504–1559; these read QDMC…CIVC, CIVC…CVSC, and LVTC…CQPY. An RING-type 3; atypical zinc finger spans residues 1507 to 1557; the sequence is CPICHAPYVEEDLLIQCRHCERWMHAGCESLFTEDDVEQAADEGFDCVSCQ. Phosphoserine is present on Ser-1606. Disordered stretches follow at residues 1610-1767, 1793-1889, 1904-2002, and 2165-2683; these read KRRQ…LEDM, GVGR…MESK, EQHL…NQRS, and PQVP…QRQR. Residues 1637–1666 show a composition bias toward basic and acidic residues; sequence PDDKKDGDLDTDELLKGEGGVEHMECEIKL. The residue at position 1671 (Ser-1671) is a Phosphoserine. Over residues 1675–1685 the composition is skewed to basic and acidic residues; it reads EPGKEETEESK. Composition is skewed to basic residues over residues 1702–1712 and 1753–1762; these read RQRKSHTRTKK and KQQRRGRKKS. Basic and acidic residues-rich tracts occupy residues 1806-1825 and 1832-1841; these read AKGDGGSERKELPTSQKGDD and EESRGLEGKA. Phosphoserine is present on residues Ser-1820 and Ser-1834. Phosphothreonine is present on residues Thr-1843 and Thr-1865. Positions 1874-1889 are enriched in basic and acidic residues; the sequence is DLDRISTEELPKMESK. The segment covering 1979–1990 has biased composition (low complexity); that stretch reads TTPSTPTTPTTE. Positions 2190 to 2209 are enriched in pro residues; that stretch reads PTAPPTYPPYPSPTGAPAQP. Ser-2239 is subject to Phosphoserine. Thr-2240 is modified (phosphothreonine). Residue Lys-2246 is modified to N6-acetyllysine. Residues Ser-2260 and Ser-2274 each carry the phosphoserine modification. Over residues 2280–2292 the composition is skewed to basic and acidic residues; the sequence is ESRKALEVKKEEL. Phosphoserine occurs at positions 2309, 2311, and 2342. 2 stretches are compositionally biased toward pro residues: residues 2350 to 2365 and 2379 to 2393; these read QEPPPAQALAPSPPSH and AQPPLTPRPQPPPPE. Composition is skewed to low complexity over residues 2409 to 2431 and 2494 to 2505; these read SRVPASPQSQSSSQSPLTPRPLS and FPAALPAGPAGE. The residue at position 2535 (Arg-2535) is an Asymmetric dimethylarginine. The span at 2547–2560 shows a compositional bias: pro residues; the sequence is LKPPVPQPGLPPPH. Residues 2574 to 2584 show a composition bias toward polar residues; it reads KPQSTNYTVAT. The span at 2589–2609 shows a compositional bias: low complexity; it reads PSGSPLGPSSGSTGESYGLSP. Positions 2610–2621 are enriched in pro residues; it reads LRPPSVLPPPAP. Ser-2640 is modified (phosphoserine). The stretch at 2669 to 2707 forms a coiled coil; sequence MSGLSQTELEKQRQRQRLRELLIRQQIQRNTLRQEKETA. Residues 2686 to 2690 carry the LXXLL motif 1 motif; it reads LRELL. 2 disordered regions span residues 2697–2814 and 2835–2996; these read RNTL…QQQQ and ARFP…LDDD. Over residues 2707–2722 the composition is skewed to low complexity; sequence AAAAAGAVGPPGSWGA. Composition is skewed to polar residues over residues 2733-2746 and 2781-2790; these read SRGQTPFAGTQDKS and PSSMDVNSRQ. Arg-2836 is modified (asymmetric dimethylarginine). The segment covering 2931-2940 has biased composition (pro residues); that stretch reads PQKPSAPPAP. The LXXLL motif 2 signature appears at 3038 to 3042; the sequence is LDDLL. A disordered region spans residues 3078–3110; it reads EKAEREALLRGVEPGPLGPEERPPPAADASEPR. Lys-3079 bears the N6-acetyllysine mark. Ser-3130 bears the Phosphoserine mark. 2 disordered regions span residues 3147–3209 and 3263–3339; these read ANSL…GSSL and KQQL…AHAL. Thr-3197 carries the post-translational modification Phosphothreonine. Composition is skewed to low complexity over residues 3198 to 3209, 3263 to 3289, and 3301 to 3320; these read PSPLSGPGGSSL, KQQLSAQLQPAQQQQQQQQQHSLLSAP, and GSSPSLAGSQQQLSLGLAGA. Phosphoserine is present on Ser-3199. Residues 3249-3282 adopt a coiled-coil conformation; sequence IEDLLEHEKKELQKKQQLSAQLQPAQQQQQQQQQ. Residues 3325–3334 are compositionally biased toward pro residues; it reads LPQPLMPTQP. Residue Lys-3433 is modified to N6-acetyllysine. Disordered regions lie at residues 3462-3499 and 3596-3673; these read LSGGPSSDLQNHVAAGSGQERSAGDPSQPRPNPPTFAQ and RNKQ…GPFL. Positions 3562–3614 form a coiled coil; the sequence is EKLKLVTEQQSKIQKQLDQVRKQQKEHTNLMAEYRNKQQQQQQQQQQQQQQHS. Composition is skewed to low complexity over residues 3599–3612 and 3631–3643; these read QQQQQQQQQQQQQQ and LPGQLLPGHGLQP. Positions 3714–3750 form a coiled coil; it reads RLLQERQLQLQQQRMQLAQKLQQQQQQQQQQQHLLGQ. An Asymmetric dimethylarginine modification is found at Arg-3727. Positions 3758-3802 are disordered; it reads QQGPGVQTNQALGPKPQGLMPPSSHQGLLVQQLSPQPPQGPQGML. A coiled-coil region spans residues 3897-3975; it reads LQQLQQQQQL…FQQQQQQQQM (79 aa). Residues 3984-4191 form a disordered region; sequence LLSPQQQQQQ…GQGLPGVGIM (208 aa). The segment covering 4012 to 4023 has biased composition (low complexity); that stretch reads PGALGPTLLLTG. A compositionally biased stretch (polar residues) spans 4024-4045; the sequence is KEQNTVDPAVSSEATEGPSTHQ. A compositionally biased stretch (low complexity) spans 4073-4108; sequence SQLLLVQPQPQPQPSSLQLQPPLRLPGQQQQQVSLL. Positions 4111-4120 are enriched in gly residues; the sequence is AGGGSHGQLG. Positions 4137–4154 are enriched in polar residues; it reads PSVSLGDQPGSMTQNLLG. Arg-4198 is subject to Asymmetric dimethylarginine. Ser-4215 is subject to Phosphoserine. An LXXLL motif 3 motif is present at residues 4222–4226; the sequence is LQALL. Disordered stretches follow at residues 4233–4398 and 4410–4452; these read QSQA…VPGH and ASQL…LLLA. The span at 4237–4251 shows a compositional bias: polar residues; sequence VRQTPPYQEPGTQTS. A compositionally biased stretch (low complexity) spans 4252-4282; it reads PLQGLLGCQPQLGGFPGPQTGPLQELGAGPR. Positions 4253–4257 match the LXXLL motif 4 motif; the sequence is LQGLL. Residues 4283-4293 show a composition bias toward pro residues; that stretch reads PQGPPRLPAPP. Low complexity-rich tracts occupy residues 4294 to 4305 and 4320 to 4331; these read GALSTGPVLGPV and PSQLPSPSSQLP. Residues 4338-4357 are compositionally biased toward pro residues; it reads PTHPGTPKPQGPTLEPPPGR. Phosphoserine is present on Ser-4359. The LXXLL motif 5 motif lies at 4463–4467; sequence LQKLL. An N6-acetyllysine modification is found at Lys-4465. 2 disordered regions span residues 4503–4544 and 4613–4727; these read QGTP…KEDG and KNNL…HLGS. Positions 4619–4633 are enriched in pro residues; the sequence is PPTPPSSLPPTPPPS. Residues 4648–4673 show a composition bias toward basic and acidic residues; the sequence is LGEHPKDAASARDSERALRDTSEVKS. Ser-4738 is subject to Phosphoserine. Lys-4756 participates in a covalent cross-link: Glycyl lysine isopeptide (Lys-Gly) (interchain with G-Cter in SUMO2). An N6-acetyllysine modification is found at Lys-4776. Ser-4822 and Ser-4849 each carry phosphoserine. A disordered region spans residues 4822–4857; that stretch reads SPARAGTEPKKGEAEGPGGKEKGLEGKSPDTGPDWL. Residues 4828-4849 show a composition bias toward basic and acidic residues; it reads TEPKKGEAEGPGGKEKGLEGKS. Lys-4880 is covalently cross-linked (Glycyl lysine isopeptide (Lys-Gly) (interchain with G-Cter in SUMO2)). A disordered region spans residues 4905-4980; it reads QLSAPPPEEP…GEDSRPPRLK (76 aa). The span at 4908–4931 shows a compositional bias: pro residues; the sequence is APPPEEPSPPPSPLAPSPASPPTE. Residues 4932-4941 are compositionally biased toward low complexity; sequence PLVELPTEPL. Residues 4966–4976 are compositionally biased toward basic and acidic residues; sequence RPPEEGEDSRP. Positions 4990-4994 match the LXXLL motif 6 motif; the sequence is LRLLL. The C2HC pre-PHD-type 2 zinc finger occupies 5029–5069; it reads MRRCCFCHEEGDGATDGPARLLNLDLDLWVHLNCALWSTEV. Residues 5090-5137 form a PHD-type 7 zinc finger; the sequence is TKCSLCQRTGATSSCNRMRCPNVYHFACAIRAKCMFFKDKTMLCPMHK. The 61-residue stretch at 5175 to 5235 folds into the FYR N-terminal domain; sequence LHMFRVGGLV…CCYRCSIGEN (61 aa). The region spanning 5236-5321 is the FYR C-terminal domain; the sequence is NGRPEFVIKV…ESCQNYLFRY (86 aa). The WDR5 interaction motif (WIN) motif lies at 5337–5342; that stretch reads GCARSE. One can recognise an SET domain in the interval 5397 to 5513; it reads NNVYLARSRI…KGEELTYDYQ (117 aa). S-adenosyl-L-methionine-binding positions include Tyr-5451 and 5474-5475; that span reads NH. Residues Cys-5477, Cys-5525, Cys-5527, and Cys-5532 each coordinate Zn(2+). A Post-SET domain is found at 5521 to 5537; the sequence is HKIPCHCGAWNCRKWMN.

Belongs to the class V-like SAM-binding methyltransferase superfamily. Histone-lysine methyltransferase family. TRX/MLL subfamily. Component of the MLL2 complex (also named ASCOM complex), at least composed of catalytic subunit KMT2D/MLL2, ASH2L, RBBP5, WDR5, NCOA6, DPY30, KDM6A, PAXIP1/PTIP, PAGR1 and alpha- and beta-tubulin. Forms a core complex with the evolutionary conserved subcomplex WRAD composed of WDR5, RBBP5, ASH2L/ASH2 and DPY30 subunits; WRAD differentially stimulates the methyltransferase activity. Interacts with ESR1; interaction is direct. Interacts (via WIN motif) with WDR5. As to expression, expressed in most adult tissues, including a variety of hematoipoietic cells, with the exception of the liver.

Its subcellular location is the nucleus. The catalysed reaction is L-lysyl(4)-[histone H3] + S-adenosyl-L-methionine = N(6)-methyl-L-lysyl(4)-[histone H3] + S-adenosyl-L-homocysteine + H(+). Histone methyltransferase that catalyzes methyl group transfer from S-adenosyl-L-methionine to the epsilon-amino group of 'Lys-4' of histone H3 (H3K4). Part of chromatin remodeling machinery predominantly forms H3K4me1 methylation marks at active chromatin sites where transcription and DNA repair take place. Acts as a coactivator for estrogen receptor by being recruited by ESR1, thereby activating transcription. In Homo sapiens (Human), this protein is Histone-lysine N-methyltransferase 2D (KMT2D).